Reading from the N-terminus, the 919-residue chain is MTDFLRDDIRFLGQILGEVIAEQEGQEVYELVEQARLTSFDIAKGNAEMDSLVQVFDGITPAKATPIARAFSHFALLANLAEDLYDEELREQALDAGDTPPDSTLDATWLKLNEGNVGAEAVADVLRNAEVAPVLTAHPTETRRRTVFDAQKWITTHMRERHALQSAEPTARTQSKLDEIEKNIRRRITILWQTALIRVARPRIEDEIEVGLRYYKLSLLEEIPRINRDVAVELRERFGEGVPLKPVVKPGSWIGGDHDGNPYVTAETVEYSTHRAAETVLKYYARQLHSLEHELSLSDRMNKVTPQLLALADAGHNDVPSRVDEPYRRAVHGVRGRILATTAELIGEDAVEGVWFKVFTPYASPEEFLNDALTIDHSLRESKDVLIADDRLSVLISAIESFGFNLYALDLRQNSESYEDVLTELFERAQVTANYRELSEAEKLEVLLKELRSPRPLIPHGSDEYSEVTDRELGIFRTASEAVKKFGPRMVPHCIISMASSVTDVLEPMVLLKEFGLIAANGDNPRGTVDVIPLFETIEDLQAGAGILDELWKIDLYRNYLLQRDNVQEVMLGYSDSNKDGGYFSANWALYDAELQLVELCRSAGVKLRLFHGRGGTVGRGGGPSYDAILAQPRGAVQGSVRITEQGEIISAKYGNPETARRNLEALVSATLEASLLDVSELTDHQRAYDIMSEISELSLKKYASLVHEDQGFIDYFTQSTPLQEIGSLNIGSRPSSRKQTSSVEDLRAIPWVLSWSQSRVMLPGWFGVGTALEQWIGEGEQATQRIAELQTLNESWPFFTSVLDNMAQVMSKAELRLAKLYADLIPDTEVAERVYSVIREEYFLTKKMFCVITGSDDLLDDNPLLARSVQRRYPYLLPLNVIQVEMMRRYRKGDQSEQVSRNIQLTMNGLSTALRNSG.

Active-site residues include His-138 and Lys-579.

This sequence belongs to the PEPCase type 1 family. Requires Mg(2+) as cofactor.

The enzyme catalyses oxaloacetate + phosphate = phosphoenolpyruvate + hydrogencarbonate. Activity not stimulated by acetyl-CoA in the absence of any allosteric inhibitor, while the corresponding protein from E.coli is strongly stimulated. Forms oxaloacetate, a four-carbon dicarboxylic acid source for the tricarboxylic acid cycle. The chain is Phosphoenolpyruvate carboxylase (ppc) from Corynebacterium glutamicum (strain ATCC 13032 / DSM 20300 / JCM 1318 / BCRC 11384 / CCUG 27702 / LMG 3730 / NBRC 12168 / NCIMB 10025 / NRRL B-2784 / 534).